Here is a 2566-residue protein sequence, read N- to C-terminus: Highly reducing polyketide synthase verA (2566 aa).

One can recognise a Ketosynthase family 3 (KS3) domain in the interval 3–440 (PEPIAIIGTG…GTNAHAILES (438 aa)). The segment at 35–61 (VASEPPSTRFDNRSFYDPDPSHPGTTN) is disordered. Residues 44-54 (FDNRSFYDPDP) show a composition bias toward basic and acidic residues. Active-site for beta-ketoacyl synthase activity residues include Cys176, His316, and His360. Residues 554-880 (IFTGQGAQWP…IGLSNRGASG (327 aa)) form a malonyl-CoA:ACP transacylase (MAT) domain region. Ser648 serves as the catalytic For malonyltransferase activity. Positions 950–1081 (HPLLGSLEAD…GKLLICWGNP (132 aa)) are N-terminal hotdog fold. Positions 950–1246 (HPLLGSLEAD…EGVHISPLGP (297 aa)) are dehydratase (DH) domain. In terms of domain architecture, PKS/mFAS DH spans 950 to 1250 (HPLLGSLEAD…ISPLGPPDRQ (301 aa)). His982 (proton acceptor; for dehydratase activity) is an active-site residue. The segment at 1096–1250 (AGAVDIKDFY…ISPLGPPDRQ (155 aa)) is C-terminal hotdog fold. The active-site Proton donor; for dehydratase activity is Asp1156. The interval 1386 to 1581 (DVLSRFYKED…TGFGGIDTIT (196 aa)) is methyltransferase (CMet) domain. The tract at residues 2127–2294 (KTYLLVGMTG…RRARNIVGSI (168 aa)) is ketoreductase (KR) domain. Residues 2411–2489 (EAAEIVAAGL…ALTADSVSKL (79 aa)) enclose the Carrier domain. Residue Ser2449 is modified to O-(pantetheine 4'-phosphoryl)serine. Positions 2505–2540 (KDVSGLTSPPEVPSDASRSSVSSGMDEIVTPESPSF) are disordered. Residues 2518-2527 (SDASRSSVSS) are compositionally biased toward low complexity.

Pantetheine 4'-phosphate serves as cofactor.

It participates in secondary metabolite biosynthesis; terpenoid biosynthesis. It functions in the pathway mycotoxin biosynthesis. Highly reducing polyketide synthase (HR-PKS); part of the gene cluster that mediates the biosynthesis of the neurotoxin verrucosidin, a methylated alpha-pyrone polyketide that inhibits oxidative phosphorylation in mitochondria and thereby causes neurological diseases. The carbon backbone of verrucosidin is synthesized by the HR-PKS verA, and further modified by the other verrucodidin cluster enzymes. This chain is Highly reducing polyketide synthase verA, found in Penicillium polonicum.